Reading from the N-terminus, the 180-residue chain is Acireductone dioxygenase (180 aa).

Fe(2+)-binding residues include histidine 97, histidine 99, glutamate 103, and histidine 141. Residues histidine 97, histidine 99, glutamate 103, and histidine 141 each contribute to the Ni(2+) site.

The protein belongs to the acireductone dioxygenase (ARD) family. Monomer. Fe(2+) is required as a cofactor. Requires Ni(2+) as cofactor.

It catalyses the reaction 1,2-dihydroxy-5-(methylsulfanyl)pent-1-en-3-one + O2 = 3-(methylsulfanyl)propanoate + CO + formate + 2 H(+). The enzyme catalyses 1,2-dihydroxy-5-(methylsulfanyl)pent-1-en-3-one + O2 = 4-methylsulfanyl-2-oxobutanoate + formate + 2 H(+). The protein operates within amino-acid biosynthesis; L-methionine biosynthesis via salvage pathway; L-methionine from S-methyl-5-thio-alpha-D-ribose 1-phosphate: step 5/6. Catalyzes 2 different reactions between oxygen and the acireductone 1,2-dihydroxy-3-keto-5-methylthiopentene (DHK-MTPene) depending upon the metal bound in the active site. Fe-containing acireductone dioxygenase (Fe-ARD) produces formate and 2-keto-4-methylthiobutyrate (KMTB), the alpha-ketoacid precursor of methionine in the methionine recycle pathway. Ni-containing acireductone dioxygenase (Ni-ARD) produces methylthiopropionate, carbon monoxide and formate, and does not lie on the methionine recycle pathway. The chain is Acireductone dioxygenase from Yersinia enterocolitica serotype O:8 / biotype 1B (strain NCTC 13174 / 8081).